The following is a 313-amino-acid chain: Aspartate carbamoyltransferase catalytic subunit (313 aa).

Carbamoyl phosphate contacts are provided by R58 and T59. K86 contacts L-aspartate. Carbamoyl phosphate contacts are provided by R108, H136, and Q139. L-aspartate-binding residues include R169 and R224. 2 residues coordinate carbamoyl phosphate: G265 and P266.

Belongs to the aspartate/ornithine carbamoyltransferase superfamily. ATCase family. In terms of assembly, heterododecamer (2C3:3R2) of six catalytic PyrB chains organized as two trimers (C3), and six regulatory PyrI chains organized as three dimers (R2).

It catalyses the reaction carbamoyl phosphate + L-aspartate = N-carbamoyl-L-aspartate + phosphate + H(+). It participates in pyrimidine metabolism; UMP biosynthesis via de novo pathway; (S)-dihydroorotate from bicarbonate: step 2/3. Functionally, catalyzes the condensation of carbamoyl phosphate and aspartate to form carbamoyl aspartate and inorganic phosphate, the committed step in the de novo pyrimidine nucleotide biosynthesis pathway. The sequence is that of Aspartate carbamoyltransferase catalytic subunit from Natranaerobius thermophilus (strain ATCC BAA-1301 / DSM 18059 / JW/NM-WN-LF).